Consider the following 227-residue polypeptide: Lipoprotein-releasing system ATP-binding protein LolD (227 aa).

One can recognise an ABC transporter domain in the interval 7–227; the sequence is LRLERIGRAY…TLKDGRVVDL (221 aa). Residue 43–50 coordinates ATP; it reads APSGAGKS.

This sequence belongs to the ABC transporter superfamily. Lipoprotein translocase (TC 3.A.1.125) family. In terms of assembly, the complex is composed of two ATP-binding proteins (LolD) and two transmembrane proteins (LolC and LolE).

It localises to the cell inner membrane. Part of the ABC transporter complex LolCDE involved in the translocation of mature outer membrane-directed lipoproteins, from the inner membrane to the periplasmic chaperone, LolA. Responsible for the formation of the LolA-lipoprotein complex in an ATP-dependent manner. The polypeptide is Lipoprotein-releasing system ATP-binding protein LolD (Brucella abortus biovar 1 (strain 9-941)).